Consider the following 706-residue polypeptide: DNA ligase (706 aa).

NAD(+)-binding positions include 47-51, 96-97, and Glu-133; these read DSEYD and SI. The active-site N6-AMP-lysine intermediate is Lys-135. The NAD(+) site is built by Arg-156, Glu-192, Lys-323, and Lys-347. Cys-441, Cys-444, Cys-459, and Cys-465 together coordinate Zn(2+). Residues 624–706 form the BRCT domain; sequence VAPKPLSGKT…MRLLASAEAE (83 aa).

This sequence belongs to the NAD-dependent DNA ligase family. LigA subfamily. Requires Mg(2+) as cofactor. Mn(2+) is required as a cofactor.

It catalyses the reaction NAD(+) + (deoxyribonucleotide)n-3'-hydroxyl + 5'-phospho-(deoxyribonucleotide)m = (deoxyribonucleotide)n+m + AMP + beta-nicotinamide D-nucleotide.. Functionally, DNA ligase that catalyzes the formation of phosphodiester linkages between 5'-phosphoryl and 3'-hydroxyl groups in double-stranded DNA using NAD as a coenzyme and as the energy source for the reaction. It is essential for DNA replication and repair of damaged DNA. This chain is DNA ligase, found in Polaromonas sp. (strain JS666 / ATCC BAA-500).